A 982-amino-acid chain; its full sequence is ATP-dependent DNA helicase Q5 (982 aa).

Residues 39–213 (MAVVKGAEDV…FAALHLKQPV (175 aa)) enclose the Helicase ATP-binding domain. An ATP-binding site is contributed by 52–59 (MPTGAGKS). Residues 157–160 (DEAH) carry the DEAH box motif. The region spanning 241–398 (NLRDFCLKAL…NKPSDKATLL (158 aa)) is the Helicase C-terminal domain. Positions 412, 428, 432, and 435 each coordinate Zn(2+). Residues serine 489 and serine 492 each carry the phosphoserine modification. Residues 491–621 (GSGDEGRDEA…ASKDGQLYDM (131 aa)) form an interaction with POLR2A region. Threonine 527 is modified (phosphothreonine). The interaction with RAD51 stretch occupies residues 653 to 726 (PKRVGAGFSK…ALGSSVNCGD (74 aa)). 2 disordered regions span residues 675-797 (GKSH…PGKC) and 812-893 (QTEG…AQEP). A Phosphoserine; by CDK1 modification is found at serine 728.

It belongs to the helicase family. RecQ subfamily. In terms of assembly, monomer. Interacts with TOP2A, TOP3A and TOP3B. Interacts with RNA polymerase II subunit POLR2A. Identified in a complex with the RNA polymerase II core bound to DNA. Interacts with RAD51. Interacts with WRN; this interaction stimulates WRN helicase activity on DNA fork duplexes. Interacts with MUS1; this interaction promotes MUS81-dependent mitotic DNA synthesis. Requires Zn(2+) as cofactor. Post-translationally, phosphorylated by CDK1 at Ser-728; this phosphorylation is required for RECQL5-mediated disruption of RAD51 filaments on stalled replication forks.

The protein localises to the nucleus. It localises to the nucleoplasm. It catalyses the reaction Couples ATP hydrolysis with the unwinding of duplex DNA by translocating in the 3'-5' direction.. It carries out the reaction ATP + H2O = ADP + phosphate + H(+). Its function is as follows. DNA helicase that plays an important role in DNA replication, transcription and repair. Binds to the RNA polymerase II subunit POLR2A during transcription elongation and suppresses transcription-associated genomic instability. Also associates with POLR1A and enforces the stability of ribosomal DNA arrays. Plays an important role in mitotic chromosome separation after cross-over events and cell cycle progress. Mechanistically, removes RAD51 filaments protecting stalled replication forks at common fragile sites and stimulates MUS81-EME1 endonuclease leading to mitotic DNA synthesis. Required for efficient DNA repair, including repair of inter-strand cross-links. Stimulates DNA decatenation mediated by TOP2A. Prevents sister chromatid exchange and homologous recombination. The sequence is that of ATP-dependent DNA helicase Q5 (Recql5) from Mus musculus (Mouse).